The sequence spans 276 residues: Mitochondrial outer membrane protein porin of 34 kDa (276 aa).

It belongs to the eukaryotic mitochondrial porin (TC 1.B.8.1) family.

It localises to the mitochondrion outer membrane. In terms of biological role, forms a channel through the cell membrane that allows diffusion of small hydrophilic molecules. The channel adopts an open conformation at low or zero membrane potential and a closed conformation at potentials above 30-40 mV. The open state has a weak anion selectivity whereas the closed state is cation-selective. The sequence is that of Mitochondrial outer membrane protein porin of 34 kDa from Solanum tuberosum (Potato).